A 691-amino-acid chain; its full sequence is Elongation factor G (691 aa).

The region spanning 8–282 (ERVRNIGIAA…AVVNYLPAPV (275 aa)) is the tr-type G domain. GTP is bound by residues 17 to 24 (AHIDAGKT), 81 to 85 (DTPGH), and 135 to 138 (NKMD).

This sequence belongs to the TRAFAC class translation factor GTPase superfamily. Classic translation factor GTPase family. EF-G/EF-2 subfamily.

The protein resides in the cytoplasm. Its function is as follows. Catalyzes the GTP-dependent ribosomal translocation step during translation elongation. During this step, the ribosome changes from the pre-translocational (PRE) to the post-translocational (POST) state as the newly formed A-site-bound peptidyl-tRNA and P-site-bound deacylated tRNA move to the P and E sites, respectively. Catalyzes the coordinated movement of the two tRNA molecules, the mRNA and conformational changes in the ribosome. The chain is Elongation factor G from Prochlorococcus marinus (strain NATL1A).